The primary structure comprises 320 residues: o-succinylbenzoate synthase (320 aa).

The active-site Proton donor is the K133. The Mg(2+) site is built by D161, E190, and D213. The active-site Proton acceptor is the K235.

Belongs to the mandelate racemase/muconate lactonizing enzyme family. MenC type 1 subfamily. A divalent metal cation serves as cofactor.

It catalyses the reaction (1R,6R)-6-hydroxy-2-succinyl-cyclohexa-2,4-diene-1-carboxylate = 2-succinylbenzoate + H2O. It participates in quinol/quinone metabolism; 1,4-dihydroxy-2-naphthoate biosynthesis; 1,4-dihydroxy-2-naphthoate from chorismate: step 4/7. It functions in the pathway quinol/quinone metabolism; menaquinone biosynthesis. Converts 2-succinyl-6-hydroxy-2,4-cyclohexadiene-1-carboxylate (SHCHC) to 2-succinylbenzoate (OSB). The protein is o-succinylbenzoate synthase of Salmonella arizonae (strain ATCC BAA-731 / CDC346-86 / RSK2980).